A 421-amino-acid polypeptide reads, in one-letter code: Adenylosuccinate synthetase (421 aa).

GTP contacts are provided by residues 11–17 and 39–41; these read GDEGKGK and GHT. Asp-12 acts as the Proton acceptor in catalysis. Asp-12 and Gly-39 together coordinate Mg(2+). Residues 12–15, 37–40, Thr-124, Arg-138, Gln-220, Thr-235, and Arg-299 contribute to the IMP site; these read DEGK and NAGH. His-40 serves as the catalytic Proton donor. Residue 295-301 participates in substrate binding; sequence TTTGRPR. GTP is bound by residues Arg-301, 327 to 329, and 409 to 411; these read KLD and SVG.

It belongs to the adenylosuccinate synthetase family. In terms of assembly, homodimer. The cofactor is Mg(2+).

It is found in the cytoplasm. The enzyme catalyses IMP + L-aspartate + GTP = N(6)-(1,2-dicarboxyethyl)-AMP + GDP + phosphate + 2 H(+). The protein operates within purine metabolism; AMP biosynthesis via de novo pathway; AMP from IMP: step 1/2. In terms of biological role, plays an important role in the de novo pathway of purine nucleotide biosynthesis. Catalyzes the first committed step in the biosynthesis of AMP from IMP. The polypeptide is Adenylosuccinate synthetase (Methanothrix thermoacetophila (strain DSM 6194 / JCM 14653 / NBRC 101360 / PT) (Methanosaeta thermophila)).